We begin with the raw amino-acid sequence, 775 residues long: Serine/threonine-protein kinase ppk6 (775 aa).

Phosphoserine is present on residues Ser132 and Ser134. One can recognise a Protein kinase domain in the interval 503-758 (YTTIKELGIG…IEETLQHHWF (256 aa)). ATP is bound by residues 509–517 (LGIGAYGQV) and Lys533. Asp636 functions as the Proton acceptor in the catalytic mechanism.

It belongs to the protein kinase superfamily. Ser/Thr protein kinase family.

It is found in the cytoplasm. It localises to the nucleus. The enzyme catalyses L-seryl-[protein] + ATP = O-phospho-L-seryl-[protein] + ADP + H(+). It catalyses the reaction L-threonyl-[protein] + ATP = O-phospho-L-threonyl-[protein] + ADP + H(+). This is Serine/threonine-protein kinase ppk6 (ppk6) from Schizosaccharomyces pombe (strain 972 / ATCC 24843) (Fission yeast).